Consider the following 429-residue polypeptide: Serine--tRNA ligase (429 aa).

T236–E238 provides a ligand contact to L-serine. R267–E269 serves as a coordination point for ATP. E290 serves as a coordination point for L-serine. An ATP-binding site is contributed by E354–S357. Residue S390 coordinates L-serine.

Belongs to the class-II aminoacyl-tRNA synthetase family. Type-1 seryl-tRNA synthetase subfamily. In terms of assembly, homodimer. The tRNA molecule binds across the dimer.

It is found in the cytoplasm. The catalysed reaction is tRNA(Ser) + L-serine + ATP = L-seryl-tRNA(Ser) + AMP + diphosphate + H(+). It carries out the reaction tRNA(Sec) + L-serine + ATP = L-seryl-tRNA(Sec) + AMP + diphosphate + H(+). It functions in the pathway aminoacyl-tRNA biosynthesis; selenocysteinyl-tRNA(Sec) biosynthesis; L-seryl-tRNA(Sec) from L-serine and tRNA(Sec): step 1/1. Its function is as follows. Catalyzes the attachment of serine to tRNA(Ser). Is also able to aminoacylate tRNA(Sec) with serine, to form the misacylated tRNA L-seryl-tRNA(Sec), which will be further converted into selenocysteinyl-tRNA(Sec). The chain is Serine--tRNA ligase from Wigglesworthia glossinidia brevipalpis.